The following is a 153-amino-acid chain: Large ribosomal subunit protein uL22 (153 aa).

Residues 125–153 (EPKEARQARKKAKSGRPAAAAKSETEKGA) form a disordered region.

This sequence belongs to the universal ribosomal protein uL22 family. In terms of assembly, part of the 50S ribosomal subunit.

Functionally, this protein binds specifically to 23S rRNA; its binding is stimulated by other ribosomal proteins, e.g. L4, L17, and L20. It is important during the early stages of 50S assembly. It makes multiple contacts with different domains of the 23S rRNA in the assembled 50S subunit and ribosome. The globular domain of the protein is located near the polypeptide exit tunnel on the outside of the subunit, while an extended beta-hairpin is found that lines the wall of the exit tunnel in the center of the 70S ribosome. This Cutibacterium acnes (strain DSM 16379 / KPA171202) (Propionibacterium acnes) protein is Large ribosomal subunit protein uL22.